The chain runs to 499 residues: Protein adenylyltransferase Fic (499 aa).

The chain crosses the membrane as a helical span at residues 38-58 (FHYFVIFASGSLFSGLMFGLL). TPR repeat units follow at residues 126–159 (ALSSLKVAIEMKTMGKDDKAARLFQHALALSPKH) and 160–194 (PEILTKYGEFLEHNQQDVVRADHYYYQALTVNPSH). An Inhibitory (S/T)XXXE(G/N) motif motif is present at residues 251 to 256 (SVGIEG). Residues E255 and 337-340 (VGGH) each bind ATP. The 136-residue stretch at 306–441 (ITLKDILEIH…IRPFVRFIAD (136 aa)) folds into the Fido domain. The active site involves H384. Residues 388 to 395 (DGNGRTSR), 420 to 421 (YY), and N428 contribute to the ATP site.

This sequence belongs to the fic family. Homodimer.

It is found in the membrane. It carries out the reaction L-tyrosyl-[protein] + ATP = O-(5'-adenylyl)-L-tyrosyl-[protein] + diphosphate. The catalysed reaction is L-threonyl-[protein] + ATP = 3-O-(5'-adenylyl)-L-threonyl-[protein] + diphosphate. It catalyses the reaction 3-O-(5'-adenylyl)-L-threonyl-[protein] + H2O = L-threonyl-[protein] + AMP + H(+). The side chain of Glu-255 determines which of the two opposing activities (AMPylase or de-AMPylase) will take place. In response to endoplasmic reticulum stress, mediates de-AMPylase activity. Adenylyltransferase activity is inhibited by the inhibitory helix present at the N-terminus: Glu-255 binds ATP and competes with ATP-binding at Arg-395, thereby preventing adenylyltransferase activity. In unstressed cells, disengagement of Glu-255 promotes adenylyltransferase activity. Activation dissociates ATP-binding from Glu-255, allowing ordered binding of the entire ATP moiety with the alpha-phosphate in an orientation that is productive for accepting an incoming target hydroxyl side chain. Its function is as follows. Protein that can both mediate the addition of adenosine 5'-monophosphate (AMP) to specific residues of target proteins (AMPylation), and the removal of the same modification from target proteins (de-AMPylation), depending on the context. The side chain of Glu-255 determines which of the two opposing activities (AMPylase or de-AMPylase) will take place. Acts as a key regulator of the unfolded protein response (UPR) by mediating AMPylation or de-AMPylation of Hsc70-3/BiP. In unstressed cells, acts as an adenylyltransferase by mediating AMPylation of Hsc70-3/BiP at 'Thr-518', thereby inactivating it. In response to endoplasmic reticulum stress, acts as a phosphodiesterase by mediating removal of ATP (de-AMPylation) from Hsc70-3/BiP at 'Thr-518', leading to restore HSPA5/BiP activity. This Aedes aegypti (Yellowfever mosquito) protein is Protein adenylyltransferase Fic.